A 399-amino-acid polypeptide reads, in one-letter code: Succinate--CoA ligase [ADP-forming] subunit beta (399 aa).

The ATP-grasp domain maps to 9–254 (KELLAKYGIG…ETEEDPAEVE (246 aa)). Residues K46, 53-55 (GRG), V112, and E117 contribute to the ATP site. Positions 209 and 223 each coordinate Mg(2+). Substrate contacts are provided by residues N274 and 331–333 (GIM).

This sequence belongs to the succinate/malate CoA ligase beta subunit family. Heterotetramer of two alpha and two beta subunits. The cofactor is Mg(2+).

The enzyme catalyses succinate + ATP + CoA = succinyl-CoA + ADP + phosphate. It carries out the reaction GTP + succinate + CoA = succinyl-CoA + GDP + phosphate. Its pathway is carbohydrate metabolism; tricarboxylic acid cycle; succinate from succinyl-CoA (ligase route): step 1/1. Functionally, succinyl-CoA synthetase functions in the citric acid cycle (TCA), coupling the hydrolysis of succinyl-CoA to the synthesis of either ATP or GTP and thus represents the only step of substrate-level phosphorylation in the TCA. The beta subunit provides nucleotide specificity of the enzyme and binds the substrate succinate, while the binding sites for coenzyme A and phosphate are found in the alpha subunit. The protein is Succinate--CoA ligase [ADP-forming] subunit beta of Erythrobacter litoralis (strain HTCC2594).